The primary structure comprises 305 residues: uncharacterized protein (305 aa).

The signal sequence occupies residues 1-29 (MSKAVSEILGYMYIFGIVMAVLAIVFVQV).

This is an uncharacterized protein from Archaeoglobus fulgidus (strain ATCC 49558 / DSM 4304 / JCM 9628 / NBRC 100126 / VC-16).